A 75-amino-acid chain; its full sequence is F1845 fimbrial adhesin operon regulatory protein DaaF (75 aa).

Its function is as follows. May have a possible regulatory function on the expression of the other daa genes. The chain is F1845 fimbrial adhesin operon regulatory protein DaaF (daaF) from Escherichia coli.